We begin with the raw amino-acid sequence, 212 residues long: Ribonuclease HII (212 aa).

The region spanning 17–211 (RVLAGIDEAG…VLELLDLTDS (195 aa)) is the RNase H type-2 domain. A divalent metal cation is bound by residues Asp-23, Glu-24, and Asp-120.

Belongs to the RNase HII family. Requires Mn(2+) as cofactor. It depends on Mg(2+) as a cofactor.

The protein localises to the cytoplasm. It carries out the reaction Endonucleolytic cleavage to 5'-phosphomonoester.. Its function is as follows. Endonuclease that specifically degrades the RNA of RNA-DNA hybrids. This is Ribonuclease HII from Chloroflexus aggregans (strain MD-66 / DSM 9485).